A 216-amino-acid polypeptide reads, in one-letter code: Probable GTP-binding protein EngB (216 aa).

The region spanning glutamate 27 to glutamate 201 is the EngB-type G domain. Residues glycine 35–serine 42, glycine 62–leucine 66, aspartate 80–glycine 83, threonine 147–aspartate 150, and phenylalanine 180–serine 182 each bind GTP. The Mg(2+) site is built by serine 42 and threonine 64.

This sequence belongs to the TRAFAC class TrmE-Era-EngA-EngB-Septin-like GTPase superfamily. EngB GTPase family. Requires Mg(2+) as cofactor.

In terms of biological role, necessary for normal cell division and for the maintenance of normal septation. The sequence is that of Probable GTP-binding protein EngB from Yersinia pseudotuberculosis serotype O:1b (strain IP 31758).